An 86-amino-acid polypeptide reads, in one-letter code: uncharacterized protein (86 aa).

A disordered region spans residues 1–21; it reads MLSNSTSRNRHSKHNKKNTRE. Positions 8–17 are enriched in basic residues; the sequence is RNRHSKHNKK.

This is an uncharacterized protein from Acidianus convivator (ATV).